We begin with the raw amino-acid sequence, 502 residues long: ATP synthase subunit alpha (502 aa).

169–176 is a binding site for ATP; the sequence is GDRQTGKT.

The protein belongs to the ATPase alpha/beta chains family. As to quaternary structure, F-type ATPases have 2 components, CF(1) - the catalytic core - and CF(0) - the membrane proton channel. CF(1) has five subunits: alpha(3), beta(3), gamma(1), delta(1), epsilon(1). CF(0) has three main subunits: a(1), b(2) and c(9-12). The alpha and beta chains form an alternating ring which encloses part of the gamma chain. CF(1) is attached to CF(0) by a central stalk formed by the gamma and epsilon chains, while a peripheral stalk is formed by the delta and b chains.

Its subcellular location is the cell membrane. The catalysed reaction is ATP + H2O + 4 H(+)(in) = ADP + phosphate + 5 H(+)(out). Functionally, produces ATP from ADP in the presence of a proton gradient across the membrane. The alpha chain is a regulatory subunit. The polypeptide is ATP synthase subunit alpha (Streptococcus pyogenes serotype M18 (strain MGAS8232)).